Here is a 486-residue protein sequence, read N- to C-terminus: CDT1-like protein b (486 aa).

2 disordered regions span residues 273 to 294 and 348 to 371; these read PEGGDDNSLRSTNSLARGPSRS and VKDDISNESGDEKSNYEGDNASDD. Over residues 281 to 294 the composition is skewed to polar residues; it reads LRSTNSLARGPSRS. Residues 348–363 show a composition bias toward basic and acidic residues; it reads VKDDISNESGDEKSNY.

This sequence belongs to the Cdt1 family. In terms of tissue distribution, expressed in proliferating (e.g. shoot and root apical meristems, organ primordia, guard cells and stomatal lineage) and endoreplicating cells (e.g. developing trichomes).

It localises to the nucleus. In terms of biological role, member of the pre-replication complex. Regulates endoreduplication. Involved in the coordination of cell and plastid division. In Arabidopsis thaliana (Mouse-ear cress), this protein is CDT1-like protein b (CDT1B).